We begin with the raw amino-acid sequence, 378 residues long: Alpha-(1,3)-fucosyltransferase fut-5 (378 aa).

Topologically, residues 1-7 (MKHNTLR) are cytoplasmic. A helical; Signal-anchor for type II membrane protein transmembrane segment spans residues 8–28 (AVFQFSFFIGICTFIMIAGYS). The Lumenal segment spans residues 29–378 (YQINYNQRMG…CDNSFATRFL (350 aa)). N44, N88, N105, N143, N171, and N307 each carry an N-linked (GlcNAc...) asparagine glycan.

Belongs to the glycosyltransferase 10 family. The cofactor is Ca(2+). N-glycosylated.

It localises to the golgi apparatus. It is found in the golgi stack membrane. The catalysed reaction is a beta-D-galactosyl-(1-&gt;3)-N-acetyl-beta-D-glucosaminyl derivative + GDP-beta-L-fucose = a beta-D-galactosyl-(1-&gt;3)-[alpha-L-fucosyl-(1-&gt;4)]-N-acetyl-beta-D-glucosaminyl derivative + GDP + H(+). The protein operates within protein modification; protein glycosylation. Inhibited by Cu(2+) and Ni(2+), and to a lesser extent by EDTA, Mn(2+) and Mg(2+). Functionally, catalyzes the addition of fucose in alpha 1-3 linkage to GalNAc-beta-1-&gt;4-GlcNAc-beta-1-&gt;3-Gal-beta-1-&gt;4-Glc (LDNT)acceptor. Unlike fut-1, does not add fucose to Man-alpha-1-&gt;3-(Man-alpha-1-&gt;6)-Man-beta-1-&gt;4-GlcNAc-beta-1-&gt;4-GlcNAc-beta-1-Asn (M3), Man-alpha-1-&gt;3-(Man-alpha-1-&gt;6)-Man-beta-1-&gt;4-GlcNAc-beta-1-&gt;4-(Fuc-alpha-1-&gt;6)-GlcNAc-beta-1-Asn (M3F6) or GlcNAc-beta-1-&gt;2-Man-alpha-1-&gt;3-(GlcNAc-beta-1-&gt;2-Man-alpha-1-&gt;6)-Man-beta-1-4-GlcNAc-beta-1-&gt;4-(Fuc-alpha-1-&gt;6)-GlcNAc-beta-1-Asn (GnM3F6) acceptors. The polypeptide is Alpha-(1,3)-fucosyltransferase fut-5 (Caenorhabditis elegans).